The chain runs to 463 residues: Asparagine--tRNA ligase (463 aa).

This sequence belongs to the class-II aminoacyl-tRNA synthetase family. As to quaternary structure, homodimer.

It localises to the cytoplasm. The enzyme catalyses tRNA(Asn) + L-asparagine + ATP = L-asparaginyl-tRNA(Asn) + AMP + diphosphate + H(+). The chain is Asparagine--tRNA ligase from Nostoc sp. (strain PCC 7120 / SAG 25.82 / UTEX 2576).